Here is a 241-residue protein sequence, read N- to C-terminus: Probable transcriptional regulatory protein LMOf2365_1554 (241 aa).

Over residues 1 to 14 (MSGHSKWNNIQGRK) the composition is skewed to polar residues. The tract at residues 1–22 (MSGHSKWNNIQGRKNAQDSKRS) is disordered.

The protein belongs to the TACO1 family.

It localises to the cytoplasm. This Listeria monocytogenes serotype 4b (strain F2365) protein is Probable transcriptional regulatory protein LMOf2365_1554.